Here is a 416-residue protein sequence, read N- to C-terminus: D-amino acid dehydrogenase 2 (416 aa).

3 to 17 (ITVLGAGVVGTAAAY) contributes to the FAD binding site.

It belongs to the DadA oxidoreductase family. The cofactor is FAD.

It catalyses the reaction a D-alpha-amino acid + A + H2O = a 2-oxocarboxylate + AH2 + NH4(+). Functionally, oxidative deamination of D-amino acids. The protein is D-amino acid dehydrogenase 2 (dadA2) of Mesorhizobium japonicum (strain LMG 29417 / CECT 9101 / MAFF 303099) (Mesorhizobium loti (strain MAFF 303099)).